A 189-amino-acid chain; its full sequence is Endoribonuclease YbeY (189 aa).

The Zn(2+) site is built by H146, H150, and H156.

This sequence belongs to the endoribonuclease YbeY family. Requires Zn(2+) as cofactor.

The protein localises to the cytoplasm. Functionally, single strand-specific metallo-endoribonuclease involved in late-stage 70S ribosome quality control and in maturation of the 3' terminus of the 16S rRNA. The sequence is that of Endoribonuclease YbeY from Prochlorococcus marinus (strain MIT 9211).